The chain runs to 377 residues: Cell division cycle-associated protein 7 (377 aa).

Disordered stretches follow at residues 58 to 113 (RTRS…EEDG) and 144 to 211 (IFSG…EEDK). Residues 76-100 (PARNTRRAANTKAAPPKPSESSAND) show a composition bias toward low complexity. The tract at residues 148-173 (RHSLPGHRTKDSKSPRRRTFPGVASR) is interaction with MYC. Residues 163-179 (RRRTFPGVASRRNPERR) carry the Nuclear localization signal motif. At Thr-166 the chain carries Phosphothreonine. Ser-193 carries the phosphoserine modification. Thr-199 bears the Phosphothreonine mark. Residues 199-210 (TEEEEDEEEEED) show a composition bias toward acidic residues. A Glycyl lysine isopeptide (Lys-Gly) (interchain with G-Cter in SUMO2) cross-link involves residue Lys-211. Position 220 is a phosphoserine (Ser-220). The tract at residues 253-377 (EEEIRNICSN…SLKQEFEMQA (125 aa)) is mediates transcriptional activity.

Interacts with MYC (via C-terminus), YWHAE and YWHAZ. Phosphorylation at Thr-166 promotes interaction with YWHAE and YWHAZ, dissociation from MYC and sequestration in the cytoplasm.

It is found in the nucleus. The protein localises to the cytoplasm. Its function is as follows. Participates in MYC-mediated cell transformation and apoptosis; induces anchorage-independent growth and clonogenicity in lymphoblastoid cells. Insufficient to induce tumorigenicity when overexpressed but contributes to MYC-mediated tumorigenesis. May play a role as transcriptional regulator. The protein is Cell division cycle-associated protein 7 (Cdca7) of Rattus norvegicus (Rat).